A 374-amino-acid chain; its full sequence is Serpin B8 (374 aa).

It belongs to the serpin family. Ov-serpin subfamily.

The protein localises to the cytoplasm. Functionally, has an important role in epithelial desmosome-mediated cell-cell adhesion. The sequence is that of Serpin B8 (SERPINB8) from Bos taurus (Bovine).